The primary structure comprises 505 residues: MAHNEAVDVVHVVLVGAGIMSATLAVLLKELDPAISLEVVELMDSGAAESSNPWNNAGTGHAGLCELNYTPQAADGNVDIKKAVHINTQFEVSKQFWTYLTRKGTFGSSKSFIAPVPHLSFVQGEKGVSFLKKRFELMHQHHAFADMEYTEDKARMAEWMPLMMPGRPADEVIAATRVMNGTDVNFGALTNQLLKHLTSAPDTQVKYCKRVTGLKRNGSGWTVSIKDVNSGSSRDVDAKFVFLGAAGAALPLLQASGIEESKGFGGFPVSGQWLRCDNPEVVKHHQAKVYSQAAVGSPPMSVPHLTPVWSMARNPCLFGPYAGFTTKFLKHGSIMDLPLSVRAGNIGPMLAVARDNMDLTKYLISEVMQSMEQRLESLRRFYPEAKAEDWRLEVAGQRVQIIKKDPKKGGVLQFGTELVAAKDGSLAALLGASPGASVTVSIMLELIERCFPDKAKGEWATKLAEIFPAREKVLETDAALYRKINAQNNIALELVEESSETQSYA.

Belongs to the MQO family. It depends on FAD as a cofactor.

It carries out the reaction (S)-malate + a quinone = a quinol + oxaloacetate. It participates in carbohydrate metabolism; tricarboxylic acid cycle; oxaloacetate from (S)-malate (quinone route): step 1/1. In Pseudomonas fluorescens, this protein is Probable malate:quinone oxidoreductase.